The sequence spans 317 residues: Melanocyte-stimulating hormone receptor (317 aa).

Topologically, residues 1–37 are extracellular; it reads MPMHGAQRKLLGSLNSTPTATSNLGLAANHTGAPCLE. N29 carries an N-linked (GlcNAc...) asparagine glycan. A helical membrane pass occupies residues 38 to 63; sequence VSIPDGLFLSLGLVSLVENVLVVAAI. At 64-72 the chain is on the cytoplasmic side; that stretch reads AKNRNLHSS. A helical membrane pass occupies residues 73–93; sequence MYCFICCLALSDLLVSGSNML. Topologically, residues 94–118 are extracellular; the sequence is ETAVILLLEAGALATRTSAMQQLHN. A helical transmembrane segment spans residues 119-140; the sequence is TIDVLTCSSMLCSLCFLGAIAV. Residues 141–163 are Cytoplasmic-facing; the sequence is DRYISIFYALRYHSIMTLPRAQR. A helical transmembrane segment spans residues 164–183; it reads AIAAIWVASXLSSTLFITYY. Topologically, residues 184–191 are extracellular; it reads DHAAVLLC. A helical membrane pass occupies residues 192-211; it reads LVVFFLAMLVLMAVLYVHML. Over 212–240 the chain is Cytoplasmic; that stretch reads ARACQHAHGIIRLHKRQTPAHQGFGLRGA. The chain crosses the membrane as a helical span at residues 241–266; sequence ATLTILLGIFFLCWGPFFLHLTLVVF. At 267-279 the chain is on the extracellular side; the sequence is CPQHLTCSCIFKN. A helical membrane pass occupies residues 280 to 300; the sequence is FKVFLTLIICNTIIDPLIYAF. Over 301–317 the chain is Cytoplasmic; that stretch reads RSQELRRTLKEVLLCSW. A lipid anchor (S-palmitoyl cysteine) is attached at C315.

This sequence belongs to the G-protein coupled receptor 1 family. As to quaternary structure, interacts with MGRN1, but does not undergo MGRN1-mediated ubiquitination; this interaction competes with GNAS-binding and thus inhibits agonist-induced cAMP production. Interacts with OPN3; the interaction results in a decrease in MC1R-mediated cAMP signaling and ultimately a decrease in melanin production in melanocytes.

It is found in the cell membrane. Functionally, receptor for MSH (alpha, beta and gamma) and ACTH. The activity of this receptor is mediated by G proteins which activate adenylate cyclase. Mediates melanogenesis, the production of eumelanin (black/brown) and phaeomelanin (red/yellow), via regulation of cAMP signaling in melanocytes. In Saguinus midas (Golden-handed tamarin), this protein is Melanocyte-stimulating hormone receptor (MC1R).